A 194-amino-acid polypeptide reads, in one-letter code: Imidazoleglycerol-phosphate dehydratase (194 aa).

It belongs to the imidazoleglycerol-phosphate dehydratase family.

It is found in the cytoplasm. The catalysed reaction is D-erythro-1-(imidazol-4-yl)glycerol 3-phosphate = 3-(imidazol-4-yl)-2-oxopropyl phosphate + H2O. The protein operates within amino-acid biosynthesis; L-histidine biosynthesis; L-histidine from 5-phospho-alpha-D-ribose 1-diphosphate: step 6/9. The protein is Imidazoleglycerol-phosphate dehydratase of Thermoanaerobacter pseudethanolicus (strain ATCC 33223 / 39E) (Clostridium thermohydrosulfuricum).